The chain runs to 421 residues: Probable UDP-arabinose 4-epimerase 1 (421 aa).

Over 1-33 (MLPTNRNRPQQRPARSWYFISDMDFSDPKRKPR) the chain is Cytoplasmic. The chain crosses the membrane as a helical; Signal-anchor for type II membrane protein span at residues 34–53 (YLSKILMVALLTAMCVVMLT). Residues 54–421 (QPPCHRRTPS…GYGPPQAMVL (368 aa)) are Lumenal-facing. An NAD(+)-binding site is contributed by 74–105 (HVLVTGGAGYIGSHAALRLLKDSFRVTIVDNL). The active-site Proton acceptor is tyrosine 222.

The protein belongs to the NAD(P)-dependent epimerase/dehydratase family. It depends on NAD(+) as a cofactor.

The protein localises to the golgi apparatus. Its subcellular location is the golgi stack membrane. It catalyses the reaction UDP-beta-L-arabinopyranose = UDP-alpha-D-xylose. It functions in the pathway nucleotide-sugar biosynthesis; UDP-L-arabinose biosynthesis; UDP-L-arabinose from UDP-alpha-D-xylose: step 1/1. It participates in cell wall biogenesis; cell wall polysaccharide biosynthesis. The protein is Probable UDP-arabinose 4-epimerase 1 (UEL-1) of Oryza sativa subsp. japonica (Rice).